The following is a 66-amino-acid chain: MPKLKTKSGAKKRFKVTGTGKVVSAHAGKRHGMIKRTKKQIRQLRGTRILFKTDGENIKKYFLPNA.

It belongs to the bacterial ribosomal protein bL35 family.

The protein is Large ribosomal subunit protein bL35 of Rhodopseudomonas palustris (strain BisB18).